Reading from the N-terminus, the 122-residue chain is Large ribosomal subunit protein uL14 (122 aa).

This sequence belongs to the universal ribosomal protein uL14 family. Part of the 50S ribosomal subunit. Forms a cluster with proteins L3 and L19. In the 70S ribosome, L14 and L19 interact and together make contacts with the 16S rRNA in bridges B5 and B8.

Functionally, binds to 23S rRNA. Forms part of two intersubunit bridges in the 70S ribosome. The protein is Large ribosomal subunit protein uL14 of Phytoplasma mali (strain AT).